Consider the following 216-residue polypeptide: uncharacterized protein (216 aa).

An Integrase catalytic domain is found at threonine 54–leucine 215.

It belongs to the transposase IS3/IS150/IS904 family.

This is an uncharacterized protein from Haemophilus influenzae (strain ATCC 51907 / DSM 11121 / KW20 / Rd).